A 415-amino-acid polypeptide reads, in one-letter code: Tyrosine--tRNA ligase (415 aa).

Position 34 (Tyr-34) interacts with L-tyrosine. A 'HIGH' region motif is present at residues 39–48 (PTSDSLTVGH). L-tyrosine contacts are provided by Tyr-164 and Gln-168. A 'KMSKS' region motif is present at residues 225–229 (KFGKS). An ATP-binding site is contributed by Lys-228. The region spanning 348–414 (IPLSEALVKT…GKKNNSLIIL (67 aa)) is the S4 RNA-binding domain.

This sequence belongs to the class-I aminoacyl-tRNA synthetase family. TyrS type 1 subfamily. As to quaternary structure, homodimer.

Its subcellular location is the cytoplasm. It catalyses the reaction tRNA(Tyr) + L-tyrosine + ATP = L-tyrosyl-tRNA(Tyr) + AMP + diphosphate + H(+). Catalyzes the attachment of tyrosine to tRNA(Tyr) in a two-step reaction: tyrosine is first activated by ATP to form Tyr-AMP and then transferred to the acceptor end of tRNA(Tyr). The chain is Tyrosine--tRNA ligase from Phytoplasma australiense.